The primary structure comprises 853 residues: Envelope glycoprotein gp160 (853 aa).

The signal sequence occupies residues methionine 1–glutamate 31. Topologically, residues lysine 32–leucine 681 are extracellular. Residues cysteine 53 and cysteine 73 are joined by a disulfide bond. N-linked (GlcNAc...) asparagine; by host glycans are attached at residues asparagine 87, asparagine 129, asparagine 134, asparagine 138, asparagine 157, asparagine 189, asparagine 199, asparagine 232, asparagine 236, asparagine 243, asparagine 264, asparagine 278, asparagine 291, asparagine 297, asparagine 303, asparagine 333, asparagine 340, asparagine 356, and asparagine 362. 5 cysteine pairs are disulfide-bonded: cysteine 118/cysteine 207, cysteine 125/cysteine 198, cysteine 130/cysteine 158, cysteine 220/cysteine 249, and cysteine 230/cysteine 241. Positions cysteine 130 to asparagine 157 are V1. Residues cysteine 158–cysteine 198 are V2. The interval cysteine 298–histidine 331 is V3. A disulfide bridge connects residues cysteine 298 and cysteine 332. The CD4-binding loop stretch occupies residues serine 364 to histidine 374. 2 disulfide bridges follow: cysteine 378-cysteine 441 and cysteine 385-cysteine 414. A V4 region spans residues cysteine 385 to cysteine 414. N-linked (GlcNAc...) asparagine; by host glycans are attached at residues asparagine 392, asparagine 396, asparagine 402, asparagine 444, and asparagine 456. The V5 stretch occupies residues glutamate 459–glycine 468. The segment at alanine 509–alanine 529 is fusion peptide. The tract at residues lysine 571–leucine 589 is immunosuppression. Residues cysteine 595 and cysteine 601 are joined by a disulfide bond. 4 N-linked (GlcNAc...) asparagine; by host glycosylation sites follow: asparagine 608, asparagine 613, asparagine 622, and asparagine 634. Positions arginine 630 to alanine 664 form a coiled coil. The segment at glutamate 659–arginine 680 is MPER; binding to GalCer. Residues phenylalanine 682–valine 702 traverse the membrane as a helical segment. The Cytoplasmic portion of the chain corresponds to asparagine 703–leucine 853. The short motif at tyrosine 709–leucine 712 is the YXXL motif; contains endocytosis signal element. Positions leucine 718–aspartate 740 are disordered. S-palmitoyl cysteine; by host attachment occurs at residues cysteine 761 and cysteine 834. The Di-leucine internalization motif motif lies at leucine 852–leucine 853.

Belongs to the HIV-1 env protein family. In terms of assembly, the mature envelope protein (Env) consists of a homotrimer of non-covalently associated gp120-gp41 heterodimers. The resulting complex protrudes from the virus surface as a spike. There seems to be as few as 10 spikes on the average virion. Interacts with host CD4, CCR5 and CXCR4. Gp120 also interacts with the C-type lectins CD209/DC-SIGN and CLEC4M/DC-SIGNR (collectively referred to as DC-SIGN(R)). Gp120 and gp41 interact with GalCer. Gp120 interacts with host ITGA4/ITGB7 complex; on CD4+ T-cells, this interaction results in rapid activation of integrin ITGAL/LFA-1, which facilitates efficient cell-to-cell spreading of HIV-1. Gp120 interacts with cell-associated heparan sulfate; this interaction increases virus infectivity on permissive cells and may be involved in infection of CD4- cells. As to quaternary structure, the mature envelope protein (Env) consists of a homotrimer of non-covalently associated gp120-gp41 heterodimers. The resulting complex protrudes from the virus surface as a spike. There seems to be as few as 10 spikes on the average virion. Post-translationally, highly glycosylated by host. The high number of glycan on the protein is reffered to as 'glycan shield' because it contributes to hide protein sequence from adaptive immune system. Palmitoylation of the transmembrane protein and of Env polyprotein (prior to its proteolytic cleavage) is essential for their association with host cell membrane lipid rafts. Palmitoylation is therefore required for envelope trafficking to classical lipid rafts, but not for viral replication. In terms of processing, specific enzymatic cleavages in vivo yield mature proteins. Envelope glycoproteins are synthesized as an inactive precursor that is heavily N-glycosylated and processed likely by host cell furin in the Golgi to yield the mature SU and TM proteins. The cleavage site between SU and TM requires the minimal sequence [KR]-X-[KR]-R. About 2 of the 9 disulfide bonds of gp41 are reduced by P4HB/PDI, following binding to CD4 receptor.

Its subcellular location is the virion membrane. The protein resides in the host cell membrane. The protein localises to the host endosome membrane. Oligomerizes in the host endoplasmic reticulum into predominantly trimers. In a second time, gp160 transits in the host Golgi, where glycosylation is completed. The precursor is then proteolytically cleaved in the trans-Golgi and thereby activated by cellular furin or furin-like proteases to produce gp120 and gp41. Functionally, attaches the virus to the host lymphoid cell by binding to the primary receptor CD4. This interaction induces a structural rearrangement creating a high affinity binding site for a chemokine coreceptor like CXCR4 and/or CCR5. Acts as a ligand for CD209/DC-SIGN and CLEC4M/DC-SIGNR, which are respectively found on dendritic cells (DCs), and on endothelial cells of liver sinusoids and lymph node sinuses. These interactions allow capture of viral particles at mucosal surfaces by these cells and subsequent transmission to permissive cells. HIV subverts the migration properties of dendritic cells to gain access to CD4+ T-cells in lymph nodes. Virus transmission to permissive T-cells occurs either in trans (without DCs infection, through viral capture and transmission), or in cis (following DCs productive infection, through the usual CD4-gp120 interaction), thereby inducing a robust infection. In trans infection, bound virions remain infectious over days and it is proposed that they are not degraded, but protected in non-lysosomal acidic organelles within the DCs close to the cell membrane thus contributing to the viral infectious potential during DCs' migration from the periphery to the lymphoid tissues. On arrival at lymphoid tissues, intact virions recycle back to DCs' cell surface allowing virus transmission to CD4+ T-cells. Its function is as follows. Acts as a class I viral fusion protein. Under the current model, the protein has at least 3 conformational states: pre-fusion native state, pre-hairpin intermediate state, and post-fusion hairpin state. During fusion of viral and target intracellular membranes, the coiled coil regions (heptad repeats) assume a trimer-of-hairpins structure, positioning the fusion peptide in close proximity to the C-terminal region of the ectodomain. The formation of this structure appears to drive apposition and subsequent fusion of viral and target cell membranes. Complete fusion occurs in host cell endosomes and is dynamin-dependent, however some lipid transfer might occur at the plasma membrane. The virus undergoes clathrin-dependent internalization long before endosomal fusion, thus minimizing the surface exposure of conserved viral epitopes during fusion and reducing the efficacy of inhibitors targeting these epitopes. Membranes fusion leads to delivery of the nucleocapsid into the cytoplasm. The sequence is that of Envelope glycoprotein gp160 from Human immunodeficiency virus type 1 group M subtype B (strain 89.6) (HIV-1).